The sequence spans 482 residues: Tripartite motif-containing protein 10 (482 aa).

Residues 16–61 (CPICQGTLREPVTIDCGHNFCCVCLTRYLEIPCLDPGELPTCPLCK) form an RING-type zinc finger. Residues 95 to 136 (EEEDVCLEHREKVYYFCEDDEMQLCVVCREAWEHRHHTVRFL) form a B box-type zinc finger. Zn(2+)-binding residues include cysteine 100, histidine 103, cysteine 122, and histidine 128. Residues 293-482 (REMKTFLEKL…GRGSKFSLSS (190 aa)) enclose the B30.2/SPRY domain.

This sequence belongs to the TRIM/RBCC family. In terms of assembly, interacts with IFNAR1; this interaction prevents association of IFNAR1 with TYK2.

It is found in the cytoplasm. E3 ligase that plays an essential role in the differentiation and survival of terminal erythroid cells. May directly bind to PTEN and promote its ubiquitination, resulting in its proteasomal degradation and activation of hypertrophic signaling. In addition, plays a role in immune response regulation by repressing the phosphorylation of STAT1 and STAT2 in the interferon/JAK/STAT signaling pathway independent of its E3 ligase activity. Mechanistically, interacts with the intracellular domain of IFNAR1 and thereby inhibits the association of TYK2 and IFNAR1. This chain is Tripartite motif-containing protein 10 (TRIM10), found in Sus scrofa (Pig).